The following is a 30-amino-acid chain: Cycloviolacin-O18 (30 aa).

The segment at residues Gly1–Asn30 is a cross-link (cyclopeptide (Gly-Asn)). Cystine bridges form between Cys4–Cys21, Cys8–Cys23, and Cys13–Cys28.

Post-translationally, this is a cyclic peptide. In terms of tissue distribution, expressed in leaves, petals and petioles but not in roots and runners (at protein level).

Functionally, probably participates in a plant defense mechanism. This is Cycloviolacin-O18 from Viola odorata (Sweet violet).